The primary structure comprises 303 residues: MENVIQELRDREVGKVLEQEPLANHTTMKIGGPADILIIPNRVEAVKDIMDIVKKHDLPWTVIGRGSNLLVLDEGIRGVVIKLGAGLDHLEIDGDQVTVGGGYSVVRLATSMSKKGMSGLEFAAGIPGSIGGAVYMNAGAHGSDMSEILVKARILFEDGTIEWLTNEEMDFSYRTSVLQKKRPGVCLEAVLQLEQKEREAITAQMQQNKDYRKNTQPYSSPCAGSIFRNPLPDHAGNLVEKAGLKGHQIGGAKVSEMHGNFIVNAGGATAKDVLDLIEYVKKTIREQYDVDMHTEVEIIGGNR.

The FAD-binding PCMH-type domain maps to 29-196 (KIGGPADILI…LEAVLQLEQK (168 aa)). Residue Arg-174 is part of the active site. The active-site Proton donor is the Ser-225. Glu-295 is a catalytic residue.

The protein belongs to the MurB family. Requires FAD as cofactor.

Its subcellular location is the cytoplasm. The catalysed reaction is UDP-N-acetyl-alpha-D-muramate + NADP(+) = UDP-N-acetyl-3-O-(1-carboxyvinyl)-alpha-D-glucosamine + NADPH + H(+). It functions in the pathway cell wall biogenesis; peptidoglycan biosynthesis. Functionally, cell wall formation. The sequence is that of UDP-N-acetylenolpyruvoylglucosamine reductase from Bacillus velezensis (strain DSM 23117 / BGSC 10A6 / LMG 26770 / FZB42) (Bacillus amyloliquefaciens subsp. plantarum).